A 185-amino-acid chain; its full sequence is Ribosome-recycling factor (185 aa).

Belongs to the RRF family.

Its subcellular location is the cytoplasm. Its function is as follows. Responsible for the release of ribosomes from messenger RNA at the termination of protein biosynthesis. May increase the efficiency of translation by recycling ribosomes from one round of translation to another. This is Ribosome-recycling factor from Haemophilus ducreyi (strain 35000HP / ATCC 700724).